We begin with the raw amino-acid sequence, 423 residues long: Myb-like protein G (423 aa).

The HTH myb-type domain maps to Thr36–Gln90. Residues Trp63–Phe86 constitute a DNA-binding region (H-T-H motif). Disordered stretches follow at residues Asn93–Lys116, Gln177–Leu205, and Ile284–Tyr372. Over residues Gln177–Gly202 the composition is skewed to low complexity. Positions Pro286–Val295 are enriched in polar residues. A compositionally biased stretch (low complexity) spans Asn302 to Asn354. Residues Gln361–Tyr372 are compositionally biased toward polar residues.

It is found in the nucleus. This chain is Myb-like protein G (mybG), found in Dictyostelium discoideum (Social amoeba).